Here is a 479-residue protein sequence, read N- to C-terminus: UDP-N-acetylmuramoylalanine--D-glutamate ligase (479 aa).

110–116 (GTNGKTS) contributes to the ATP binding site.

The protein belongs to the MurCDEF family.

It is found in the cytoplasm. It carries out the reaction UDP-N-acetyl-alpha-D-muramoyl-L-alanine + D-glutamate + ATP = UDP-N-acetyl-alpha-D-muramoyl-L-alanyl-D-glutamate + ADP + phosphate + H(+). Its pathway is cell wall biogenesis; peptidoglycan biosynthesis. In terms of biological role, cell wall formation. Catalyzes the addition of glutamate to the nucleotide precursor UDP-N-acetylmuramoyl-L-alanine (UMA). The sequence is that of UDP-N-acetylmuramoylalanine--D-glutamate ligase from Bifidobacterium adolescentis (strain ATCC 15703 / DSM 20083 / NCTC 11814 / E194a).